The primary structure comprises 289 residues: NAC domain-containing protein 2 (289 aa).

Residues 7-158 (LPPGFRFHPT…DWVLCRIYNK (152 aa)) form the NAC domain.

Interacts with KIN10 and KIN11.

The protein localises to the nucleus. The protein is NAC domain-containing protein 2 (NAC002) of Arabidopsis thaliana (Mouse-ear cress).